The sequence spans 116 residues: MPSVQKTVVKKSHKFVIDCTAPAGKIVDVAAFEKYLHDRIKVDNKVGNLGSTVVISKDKSKIIINTTIPFSKRYLKYLTKKFLKFKQIRDFLRVVATTKNTYELRYFNIGDSESQE.

Belongs to the eukaryotic ribosomal protein eL22 family.

The polypeptide is Large ribosomal subunit protein eL22A (rpl22) (Dictyostelium discoideum (Social amoeba)).